Reading from the N-terminus, the 198-residue chain is RNA-free ribonuclease P (198 aa).

It belongs to the HARP family.

It carries out the reaction Endonucleolytic cleavage of RNA, removing 5'-extranucleotides from tRNA precursor.. In terms of biological role, RNA-free RNase P that catalyzes the removal of the 5'-leader sequence from pre-tRNA to produce the mature 5'-terminus. The sequence is that of RNA-free ribonuclease P from Nitrosococcus oceani (strain ATCC 19707 / BCRC 17464 / JCM 30415 / NCIMB 11848 / C-107).